We begin with the raw amino-acid sequence, 706 residues long: Termination factor NPH-I homolog (706 aa).

Positions 62–227 (IGQGENTRGL…VPCFNMLSGR (166 aa)) constitute a Helicase ATP-binding domain. Residue 75-82 (HQMGMGKT) participates in ATP binding. A DEAH box motif is present at residues 168-171 (DEAH). Positions 378-599 (KIVCMLKNIK…HLNSAFRDLL (222 aa)) constitute a Helicase C-terminal domain.

It belongs to the DEAD box helicase family. DEAH subfamily. Part of the viral DNA-directed RNA polymerase that consists of 8 polII-like subunits (RPB1, RPB2, RPB3, RPB5, RPB6, RPB7, RPB9, RPB10), a capping enzyme and a termination factor.

The protein resides in the virion. Functionally, putative DNA-dependent ATPase required for providing the needed energy to achieve the termination of early transcripts. This African swine fever virus (isolate Pig/Kenya/KEN-50/1950) (ASFV) protein is Termination factor NPH-I homolog.